The following is a 124-amino-acid chain: Small ribosomal subunit protein uS12 (124 aa).

Aspartate 89 is subject to 3-methylthioaspartic acid.

It belongs to the universal ribosomal protein uS12 family. In terms of assembly, part of the 30S ribosomal subunit. Contacts proteins S8 and S17. May interact with IF1 in the 30S initiation complex.

Functionally, with S4 and S5 plays an important role in translational accuracy. In terms of biological role, interacts with and stabilizes bases of the 16S rRNA that are involved in tRNA selection in the A site and with the mRNA backbone. Located at the interface of the 30S and 50S subunits, it traverses the body of the 30S subunit contacting proteins on the other side and probably holding the rRNA structure together. The combined cluster of proteins S8, S12 and S17 appears to hold together the shoulder and platform of the 30S subunit. In Acinetobacter baylyi (strain ATCC 33305 / BD413 / ADP1), this protein is Small ribosomal subunit protein uS12.